Consider the following 382-residue polypeptide: Mannitol-1-phosphate 5-dehydrogenase (382 aa).

An NAD(+)-binding site is contributed by 3-14; that stretch reads AVHFGAGNIGRG.

It belongs to the mannitol dehydrogenase family.

The enzyme catalyses D-mannitol 1-phosphate + NAD(+) = beta-D-fructose 6-phosphate + NADH + H(+). The protein is Mannitol-1-phosphate 5-dehydrogenase of Exiguobacterium sp. (strain ATCC BAA-1283 / AT1b).